The chain runs to 70 residues: Large ribosomal subunit protein bL31 (70 aa).

Zn(2+) contacts are provided by Cys16, Cys18, Cys37, and Cys40.

This sequence belongs to the bacterial ribosomal protein bL31 family. Type A subfamily. Part of the 50S ribosomal subunit. Zn(2+) is required as a cofactor.

Functionally, binds the 23S rRNA. The protein is Large ribosomal subunit protein bL31 of Haemophilus influenzae (strain 86-028NP).